A 214-amino-acid chain; its full sequence is Octanoyltransferase (214 aa).

The 177-residue stretch at 35 to 211 (KSNIDFIWLG…IIQEEFYFNF (177 aa)) folds into the BPL/LPL catalytic domain. Residues 75–82 (RGGEVTCH), 142–144 (SIG), and 155–157 (GFS) each bind substrate. The Acyl-thioester intermediate role is filled by Cys173.

This sequence belongs to the LipB family.

The protein resides in the cytoplasm. The catalysed reaction is octanoyl-[ACP] + L-lysyl-[protein] = N(6)-octanoyl-L-lysyl-[protein] + holo-[ACP] + H(+). It functions in the pathway protein modification; protein lipoylation via endogenous pathway; protein N(6)-(lipoyl)lysine from octanoyl-[acyl-carrier-protein]: step 1/2. Functionally, catalyzes the transfer of endogenously produced octanoic acid from octanoyl-acyl-carrier-protein onto the lipoyl domains of lipoate-dependent enzymes. Lipoyl-ACP can also act as a substrate although octanoyl-ACP is likely to be the physiological substrate. This Prochlorococcus marinus (strain MIT 9515) protein is Octanoyltransferase.